Consider the following 825-residue polypeptide: MSGWRKIYYKLLNLPLKLLVKSKVIPADPVVELGLDPSRPILYVLPYNSQADLLTLRAKCLALGLPDPSQSFEFNGVELPSHVFINDGPRVFRYYVPKQKSVKLFHDYLDLHRANPDLDVQMVPVSVMFGRSPGREGHTQAAPHLRLLNGIEKFFAVLWLGRDSFVRFSSPVSLRYMATEHGTDKTIAHKLARVARMHFSRQRLAAVGPRLPVRQELFNKLLDSKAIKKAVDDEARSKKISHEKAQQNAIALMEEIAADFSYEAVRLSDRVLSWTWNRLYQGINVHNAERVRQLAQDGHGIVYVPCHRSHMDYLLLSYVLYHQGLVPPHIAAGINLNFWPAGPIFRRLGAFFIRRTFKGNKLYSTIFREYLGELFARGYSVEYFMEGGRSRTGRLLDPKTGTLAMTIQAMLRGGTRPITLVPIYVGYEHVMEVGTYAKELRGAVKEKEGFMQMVRGLRKLRNLGQGYVNFGEPLPLTTYLNQHVPQWRDAIDPIEAQRPSWLTPTVQDISMDIMVRINNSAAANAMNLCSTALLASRQRSLTREQMHEQLDCYLQLLRQVPYHKDITAPKKTADELLEHALGMNKFEVEKDSIGDIIILPREQAVLMTYYRNNIQHLLILPSLIASIVIHHRRITLAEVVRQITLIYPLLQAELFLHYSNEQLPRVLETLANELTRQELLCSRDGQLAINPPRIRTLQLLSAGVRETLQRYAITLSLLCANPEINRGTLEKESRNMAQRLSVLHGINAPEFFDKAVFSTLVATLRTEGYITDSAEAAQGDIVTIYNILGDLITPEVRLTIESASSSTEMEASTSSSQTAEETTQG.

Positions cysteine 306–methionine 311 match the HXXXXD motif motif. A disordered region spans residues serine 802–glycine 825.

Belongs to the GPAT/DAPAT family.

The protein resides in the cell inner membrane. It catalyses the reaction sn-glycerol 3-phosphate + an acyl-CoA = a 1-acyl-sn-glycero-3-phosphate + CoA. It participates in phospholipid metabolism; CDP-diacylglycerol biosynthesis; CDP-diacylglycerol from sn-glycerol 3-phosphate: step 1/3. The chain is Glycerol-3-phosphate acyltransferase from Pectobacterium atrosepticum (strain SCRI 1043 / ATCC BAA-672) (Erwinia carotovora subsp. atroseptica).